A 428-amino-acid polypeptide reads, in one-letter code: Gamma-glutamyl phosphate reductase (428 aa).

The protein belongs to the gamma-glutamyl phosphate reductase family.

The protein localises to the cytoplasm. The catalysed reaction is L-glutamate 5-semialdehyde + phosphate + NADP(+) = L-glutamyl 5-phosphate + NADPH + H(+). Its pathway is amino-acid biosynthesis; L-proline biosynthesis; L-glutamate 5-semialdehyde from L-glutamate: step 2/2. Catalyzes the NADPH-dependent reduction of L-glutamate 5-phosphate into L-glutamate 5-semialdehyde and phosphate. The product spontaneously undergoes cyclization to form 1-pyrroline-5-carboxylate. The polypeptide is Gamma-glutamyl phosphate reductase (Anaeromyxobacter sp. (strain Fw109-5)).